The sequence spans 315 residues: Methionyl-tRNA formyltransferase (315 aa).

Ser109–Pro112 is a (6S)-5,6,7,8-tetrahydrofolate binding site.

This sequence belongs to the Fmt family.

The catalysed reaction is L-methionyl-tRNA(fMet) + (6R)-10-formyltetrahydrofolate = N-formyl-L-methionyl-tRNA(fMet) + (6S)-5,6,7,8-tetrahydrofolate + H(+). Functionally, attaches a formyl group to the free amino group of methionyl-tRNA(fMet). The formyl group appears to play a dual role in the initiator identity of N-formylmethionyl-tRNA by promoting its recognition by IF2 and preventing the misappropriation of this tRNA by the elongation apparatus. The sequence is that of Methionyl-tRNA formyltransferase from Lachnospira eligens (strain ATCC 27750 / DSM 3376 / VPI C15-48 / C15-B4) (Eubacterium eligens).